Here is a 74-residue protein sequence, read N- to C-terminus: Cold shock-like protein CspD (74 aa).

The CSD domain occupies 4-64 (GTVKWFNNAK…GPKGNHASVI (61 aa)).

Homodimer.

The protein resides in the cytoplasm. Its function is as follows. Inhibits DNA replication at both initiation and elongation steps, most probably by binding to the opened, single-stranded regions at replication forks. Plays a regulatory role in chromosomal replication in nutrient-depleted cells. This chain is Cold shock-like protein CspD (cspD), found in Escherichia coli O157:H7.